The chain runs to 287 residues: Bifunctional protein FolD (287 aa).

NADP(+) contacts are provided by residues 166 to 168 (GAS) and Ile232.

This sequence belongs to the tetrahydrofolate dehydrogenase/cyclohydrolase family. Homodimer.

The enzyme catalyses (6R)-5,10-methylene-5,6,7,8-tetrahydrofolate + NADP(+) = (6R)-5,10-methenyltetrahydrofolate + NADPH. It carries out the reaction (6R)-5,10-methenyltetrahydrofolate + H2O = (6R)-10-formyltetrahydrofolate + H(+). The protein operates within one-carbon metabolism; tetrahydrofolate interconversion. Functionally, catalyzes the oxidation of 5,10-methylenetetrahydrofolate to 5,10-methenyltetrahydrofolate and then the hydrolysis of 5,10-methenyltetrahydrofolate to 10-formyltetrahydrofolate. The polypeptide is Bifunctional protein FolD (Pectobacterium atrosepticum (strain SCRI 1043 / ATCC BAA-672) (Erwinia carotovora subsp. atroseptica)).